A 296-amino-acid polypeptide reads, in one-letter code: Probable lipid kinase YegS-like (296 aa).

The DAGKc domain occupies methionine 1 to histidine 130. Residues threonine 37, glycine 63–glutamate 69, and threonine 92 contribute to the ATP site. Positions 212, 215, and 217 each coordinate Mg(2+). Glutamate 268 functions as the Proton acceptor in the catalytic mechanism.

This sequence belongs to the diacylglycerol/lipid kinase family. YegS lipid kinase subfamily. It depends on Mg(2+) as a cofactor. Requires Ca(2+) as cofactor.

It is found in the cytoplasm. In terms of biological role, probably phosphorylates lipids; the in vivo substrate is unknown. The sequence is that of Probable lipid kinase YegS-like from Yersinia pseudotuberculosis serotype I (strain IP32953).